The primary structure comprises 657 residues: Tyrosine-protein phosphatase vhp-1 (657 aa).

The 131-residue stretch at 21 to 151 (APDTTLVVDC…FAQQYPQLCE (131 aa)) folds into the Rhodanese domain. Residues 175 to 318 (GITLITPNIY…LLEYENVLIK (144 aa)) enclose the Tyrosine-protein phosphatase domain. Cys-262 (phosphocysteine intermediate) is an active-site residue. Disordered stretches follow at residues 353–426 (SNCV…MDLG), 539–563 (VPAG…SSSA), and 581–657 (PAST…PCHQ). A compositionally biased stretch (low complexity) spans 366–405 (SPSSPSVSEGSAASEPETSSSAASSSSTASAPPSMPSTSE). Positions 406 to 419 (QGTSSGTVNVNGKR) are enriched in polar residues. Composition is skewed to low complexity over residues 542-563 (GSSS…SSSA) and 581-597 (PAST…TSRA).

Belongs to the protein-tyrosine phosphatase family. Non-receptor class dual specificity subfamily. As to quaternary structure, may interact with pmk-3. Expressed in the pharynx, intestine, neurons and vulval hypodermal cells.

The enzyme catalyses O-phospho-L-tyrosyl-[protein] + H2O = L-tyrosyl-[protein] + phosphate. Acts preferentially on the c-Jun N-terminal kinase (JNK) and p38 MAPKs. Plays an important role in the heavy metal stress response and in axon regeneration by negatively regulating the kgb-1 (JNK-like) and the pmk-1 (p38-type) MAPK signaling pathways. The protein is Tyrosine-protein phosphatase vhp-1 (vhp-1) of Caenorhabditis elegans.